The following is a 231-amino-acid chain: Large ribosomal subunit protein uL1 (231 aa).

The protein belongs to the universal ribosomal protein uL1 family. Part of the 50S ribosomal subunit.

Functionally, binds directly to 23S rRNA. The L1 stalk is quite mobile in the ribosome, and is involved in E site tRNA release. In terms of biological role, protein L1 is also a translational repressor protein, it controls the translation of the L11 operon by binding to its mRNA. The protein is Large ribosomal subunit protein uL1 of Acinetobacter baylyi (strain ATCC 33305 / BD413 / ADP1).